A 385-amino-acid polypeptide reads, in one-letter code: Carbamoyl phosphate synthase small chain (385 aa).

The segment at 1-185 (MSEPAILVLA…LGKGFIEQTQ (185 aa)) is CPSase. Ser47, Gly237, and Gly239 together coordinate L-glutamine. Residues 189–376 (NVVAYDFGVK…INEMRKANLS (188 aa)) enclose the Glutamine amidotransferase type-1 domain. Cys265 acts as the Nucleophile in catalysis. L-glutamine-binding residues include Leu266, Gln269, Asn307, Gly309, and Phe310. Active-site residues include His349 and Glu351.

This sequence belongs to the CarA family. Composed of two chains; the small (or glutamine) chain promotes the hydrolysis of glutamine to ammonia, which is used by the large (or ammonia) chain to synthesize carbamoyl phosphate. Tetramer of heterodimers (alpha,beta)4.

The enzyme catalyses hydrogencarbonate + L-glutamine + 2 ATP + H2O = carbamoyl phosphate + L-glutamate + 2 ADP + phosphate + 2 H(+). It carries out the reaction L-glutamine + H2O = L-glutamate + NH4(+). The protein operates within amino-acid biosynthesis; L-arginine biosynthesis; carbamoyl phosphate from bicarbonate: step 1/1. Its pathway is pyrimidine metabolism; UMP biosynthesis via de novo pathway; (S)-dihydroorotate from bicarbonate: step 1/3. Its function is as follows. Small subunit of the glutamine-dependent carbamoyl phosphate synthetase (CPSase). CPSase catalyzes the formation of carbamoyl phosphate from the ammonia moiety of glutamine, carbonate, and phosphate donated by ATP, constituting the first step of 2 biosynthetic pathways, one leading to arginine and/or urea and the other to pyrimidine nucleotides. The small subunit (glutamine amidotransferase) binds and cleaves glutamine to supply the large subunit with the substrate ammonia. In Pasteurella multocida (strain Pm70), this protein is Carbamoyl phosphate synthase small chain.